A 324-amino-acid chain; its full sequence is Malate dehydrogenase (324 aa).

Residues 20–25 and D44 contribute to the NAD(+) site; that span reads GAGNVG. Residues R93 and R99 each coordinate substrate. Residues N106 and 129 to 131 each bind NAD(+); that span reads VTN. Substrate contacts are provided by N131 and R162. The Proton acceptor role is filled by H186.

It belongs to the LDH/MDH superfamily. MDH type 3 family.

The enzyme catalyses (S)-malate + NAD(+) = oxaloacetate + NADH + H(+). Catalyzes the reversible oxidation of malate to oxaloacetate. In Synechocystis sp. (strain ATCC 27184 / PCC 6803 / Kazusa), this protein is Malate dehydrogenase.